A 77-amino-acid polypeptide reads, in one-letter code: Translation initiation factor IF-1, chloroplastic (77 aa).

In terms of domain architecture, S1-like spans 1–71; it reads MKEQKWIHEG…TRGRIIYRLR (71 aa).

It belongs to the IF-1 family. Component of the 30S ribosomal translation pre-initiation complex which assembles on the 30S ribosome in the order IF-2 and IF-3, IF-1 and N-formylmethionyl-tRNA(fMet); mRNA recruitment can occur at any time during PIC assembly.

Its subcellular location is the plastid. It localises to the chloroplast. Functionally, one of the essential components for the initiation of protein synthesis. Stabilizes the binding of IF-2 and IF-3 on the 30S subunit to which N-formylmethionyl-tRNA(fMet) subsequently binds. Helps modulate mRNA selection, yielding the 30S pre-initiation complex (PIC). Upon addition of the 50S ribosomal subunit IF-1, IF-2 and IF-3 are released leaving the mature 70S translation initiation complex. The sequence is that of Translation initiation factor IF-1, chloroplastic from Antirrhinum majus (Garden snapdragon).